The sequence spans 233 residues: Small ribosomal subunit protein uS2 (233 aa).

This sequence belongs to the universal ribosomal protein uS2 family.

In Clostridium perfringens (strain ATCC 13124 / DSM 756 / JCM 1290 / NCIMB 6125 / NCTC 8237 / Type A), this protein is Small ribosomal subunit protein uS2.